A 115-amino-acid chain; its full sequence is Large ribosomal subunit protein bL19 (115 aa).

This sequence belongs to the bacterial ribosomal protein bL19 family.

In terms of biological role, this protein is located at the 30S-50S ribosomal subunit interface and may play a role in the structure and function of the aminoacyl-tRNA binding site. The polypeptide is Large ribosomal subunit protein bL19 (Salmonella choleraesuis (strain SC-B67)).